Reading from the N-terminus, the 361-residue chain is 5-formaminoimidazole-4-carboxamide-1-(beta)-D-ribofuranosyl 5'-monophosphate synthetase (361 aa).

2 residues coordinate 5-amino-1-(5-phospho-beta-D-ribosyl)imidazole-4-carboxamide: His-27 and Ser-94. The ATP-grasp domain occupies 116–348 (RAILRWEAER…MGQRIAREIK (233 aa)). ATP contacts are provided by residues 146–208 (PDDI…ANYC) and Glu-230. Asn-258 is a 5-amino-1-(5-phospho-beta-D-ribosyl)imidazole-4-carboxamide binding site. Mg(2+)-binding residues include Gln-297 and Glu-310.

The protein belongs to the phosphohexose mutase family. It depends on Mg(2+) as a cofactor. Requires Mn(2+) as cofactor.

The catalysed reaction is 5-amino-1-(5-phospho-beta-D-ribosyl)imidazole-4-carboxamide + formate + ATP = 5-formamido-1-(5-phospho-D-ribosyl)imidazole-4-carboxamide + ADP + phosphate. Its pathway is purine metabolism; IMP biosynthesis via de novo pathway; 5-formamido-1-(5-phospho-D-ribosyl)imidazole-4-carboxamide from 5-amino-1-(5-phospho-D-ribosyl)imidazole-4-carboxamide (formate route): step 1/1. In terms of biological role, catalyzes the ATP- and formate-dependent formylation of 5-aminoimidazole-4-carboxamide-1-beta-d-ribofuranosyl 5'-monophosphate (AICAR) to 5-formaminoimidazole-4-carboxamide-1-beta-d-ribofuranosyl 5'-monophosphate (FAICAR) in the absence of folates. This is 5-formaminoimidazole-4-carboxamide-1-(beta)-D-ribofuranosyl 5'-monophosphate synthetase from Methanococcus maripaludis (strain C7 / ATCC BAA-1331).